The primary structure comprises 476 residues: Glutamate--tRNA ligase (476 aa).

A 'HIGH' region motif is present at residues 9-19 (PSPTGLFHIGT). Residues 248 to 252 (KLSKR) carry the 'KMSKS' region motif. ATP is bound at residue Lys251.

It belongs to the class-I aminoacyl-tRNA synthetase family. Glutamate--tRNA ligase type 1 subfamily. In terms of assembly, monomer.

Its subcellular location is the cytoplasm. The catalysed reaction is tRNA(Glu) + L-glutamate + ATP = L-glutamyl-tRNA(Glu) + AMP + diphosphate. Its function is as follows. Catalyzes the attachment of glutamate to tRNA(Glu) in a two-step reaction: glutamate is first activated by ATP to form Glu-AMP and then transferred to the acceptor end of tRNA(Glu). The polypeptide is Glutamate--tRNA ligase (Prochlorococcus marinus (strain AS9601)).